The chain runs to 83 residues: METLLLTLLVVTIVCLDLGYTLECHNQQSSQTPTTTGCSGGETNCYKKRWRDHRGYRTERGCGCPSVKNGIEINCCTTDRCNN.

The N-terminal stretch at 1 to 21 (METLLLTLLVVTIVCLDLGYT) is a signal peptide. Intrachain disulfides connect cysteine 24–cysteine 45, cysteine 38–cysteine 62, cysteine 64–cysteine 75, and cysteine 76–cysteine 81.

It belongs to the three-finger toxin family. Short-chain subfamily. Type I alpha-neurotoxin sub-subfamily. As to expression, expressed by the venom gland.

It localises to the secreted. Binds to muscle nicotinic acetylcholine receptor (nAChR) and inhibit acetylcholine from binding to the receptor, thereby impairing neuromuscular transmission. The chain is Cobrotoxin homolog from Naja naja (Indian cobra).